A 433-amino-acid chain; its full sequence is Cyclin-dependent kinase 15 (433 aa).

The disordered stretch occupies residues Ala-46 to Leu-83. One can recognise a Protein kinase domain in the interval Ser-52–Trp-336. ATP is bound by residues Leu-58–Leu-66 and Glu-81. Thr-173 (proton acceptor) is an active-site residue.

The protein belongs to the protein kinase superfamily. CMGC Ser/Thr protein kinase family. CDC2/CDKX subfamily. Mg(2+) is required as a cofactor.

It catalyses the reaction L-seryl-[protein] + ATP = O-phospho-L-seryl-[protein] + ADP + H(+). The enzyme catalyses L-threonyl-[protein] + ATP = O-phospho-L-threonyl-[protein] + ADP + H(+). Serine/threonine-protein kinase that acts like an antiapoptotic protein that counters TRAIL/TNFSF10-induced apoptosis by inducing phosphorylation of BIRC5 at 'Thr-34'. The sequence is that of Cyclin-dependent kinase 15 (Cdk15) from Mus musculus (Mouse).